The following is a 668-amino-acid chain: tRNA 5-methylaminomethyl-2-thiouridine biosynthesis bifunctional protein MnmC (668 aa).

Positions 1 to 245 (MKHYSIQPAN…KREMLCGVME (245 aa)) are tRNA (mnm(5)s(2)U34)-methyltransferase. The segment at 270 to 668 (IGGGIASALL…LLKGKAVKAG (399 aa)) is FAD-dependent cmnm(5)s(2)U34 oxidoreductase.

In the N-terminal section; belongs to the methyltransferase superfamily. tRNA (mnm(5)s(2)U34)-methyltransferase family. The protein in the C-terminal section; belongs to the DAO family. Requires FAD as cofactor.

It is found in the cytoplasm. The catalysed reaction is 5-aminomethyl-2-thiouridine(34) in tRNA + S-adenosyl-L-methionine = 5-methylaminomethyl-2-thiouridine(34) in tRNA + S-adenosyl-L-homocysteine + H(+). In terms of biological role, catalyzes the last two steps in the biosynthesis of 5-methylaminomethyl-2-thiouridine (mnm(5)s(2)U) at the wobble position (U34) in tRNA. Catalyzes the FAD-dependent demodification of cmnm(5)s(2)U34 to nm(5)s(2)U34, followed by the transfer of a methyl group from S-adenosyl-L-methionine to nm(5)s(2)U34, to form mnm(5)s(2)U34. The sequence is that of tRNA 5-methylaminomethyl-2-thiouridine biosynthesis bifunctional protein MnmC from Shigella dysenteriae serotype 1 (strain Sd197).